A 48-amino-acid polypeptide reads, in one-letter code: Ribulose bisphosphate carboxylase large chain (48 aa).

It belongs to the RuBisCO large chain family. Type I subfamily. As to quaternary structure, heterohexadecamer of 8 large chains and 8 small chains.

Its subcellular location is the plastid. The protein resides in the chloroplast. It carries out the reaction 2 (2R)-3-phosphoglycerate + 2 H(+) = D-ribulose 1,5-bisphosphate + CO2 + H2O. It catalyses the reaction D-ribulose 1,5-bisphosphate + O2 = 2-phosphoglycolate + (2R)-3-phosphoglycerate + 2 H(+). In terms of biological role, ruBisCO catalyzes two reactions: the carboxylation of D-ribulose 1,5-bisphosphate, the primary event in carbon dioxide fixation, as well as the oxidative fragmentation of the pentose substrate in the photorespiration process. Both reactions occur simultaneously and in competition at the same active site. The chain is Ribulose bisphosphate carboxylase large chain (rbcL) from Pinus pinaster (Maritime pine).